Consider the following 98-residue polypeptide: Acylphosphatase (98 aa).

An Acylphosphatase-like domain is found at 12–98 (TYYVRVRGVV…DKRFERFQQH (87 aa)). Active-site residues include Arg-27 and Asn-45.

This sequence belongs to the acylphosphatase family.

The catalysed reaction is an acyl phosphate + H2O = a carboxylate + phosphate + H(+). This chain is Acylphosphatase (acyP), found in Burkholderia thailandensis (strain ATCC 700388 / DSM 13276 / CCUG 48851 / CIP 106301 / E264).